The primary structure comprises 345 residues: MTGMSKFNKEITVFIFFLALVILWGLFANASADMKTPVDTKVPVDTKTPFQGKKVAGFFIEFEEGTTEPEVKDILENYNMTVNTIDYNSDIIPGRYYMILDRDRIMDIEELVDEVNLTIPIKKGSNYLVTVTEQAIEDKNFLAILEKNNLPVKKSVYCYIRLEDESENGSIPQKDAYQIANELEKNEKVLAASPDTRINHLLIEFEDGTTEQEVKSILEKYNTTMNTIEYDSNLQPERYYLVVDADKRMDVRNELGKDENWTDPIYHDIKKGNHYIITVTEQAIEDKNFLAMLEKNDLQVKNSVLCCITLGNESKNWIWESDERRIENELKMNEKVLTLLRCGST.

The protein belongs to the UPF0228 family.

The sequence is that of UPF0228 protein MA_2656 from Methanosarcina acetivorans (strain ATCC 35395 / DSM 2834 / JCM 12185 / C2A).